The sequence spans 172 residues: Large ribosomal subunit protein uL11m (172 aa).

It belongs to the universal ribosomal protein uL11 family.

The protein resides in the mitochondrion. This chain is Large ribosomal subunit protein uL11m (mrpl11), found in Dictyostelium discoideum (Social amoeba).